The sequence spans 400 residues: Bifunctional arginine demethylase and lysyl-hydroxylase psr-1 (400 aa).

The JmjC domain maps to 146 to 310 (RKTKKLSEDY…LVWPKTVKGR (165 aa)). Residue T189 participates in substrate binding. The Fe cation site is built by H192 and D194. N202 provides a ligand contact to 2-oxoglutarate. K209 contacts substrate. H278 contacts Fe cation. T290 is a 2-oxoglutarate binding site. The tract at residues 342-400 (DMNESSSDSSSSSSSSDDSSDESDCDDSGRCGGRKRKNDDRSNECPEKMSTTYFQNSLV) is disordered. Residues 346–358 (SSSDSSSSSSSSD) are compositionally biased toward low complexity. A compositionally biased stretch (basic and acidic residues) spans 378-388 (KNDDRSNECPE). Residues 390 to 400 (MSTTYFQNSLV) are compositionally biased toward polar residues.

Belongs to the JMJD6 family. As to quaternary structure, interacts with ced-5 and ced-12. Fe(2+) serves as cofactor.

It is found in the nucleus. Dioxygenase that can both act as a histone arginine demethylase and a lysyl-hydroxylase. This chain is Bifunctional arginine demethylase and lysyl-hydroxylase psr-1 (psr-1), found in Caenorhabditis elegans.